Reading from the N-terminus, the 271-residue chain is Murein DD-endopeptidase MepH (271 aa).

Residues 1–27 (MARINRISITLCALLFTTLPLTPMAHA) form the signal peptide. The interval 27–102 (ASKQARESSA…KHAVNKTASA (76 aa)) is disordered. Basic residues predominate over residues 55–64 (KTQKTAKKAA). The segment covering 65–86 (SKSTTKSKTASSVKKSSITASK) has biased composition (low complexity). A NlpC/P60 domain is found at 138-265 (QKATKVAMNK…RHYVGARRVM (128 aa)). The Nucleophile role is filled by cysteine 169. Histidine 224 acts as the Proton acceptor in catalysis. The active site involves glutamine 236.

Belongs to the peptidase C40 family.

It functions in the pathway cell wall biogenesis; cell wall polysaccharide biosynthesis. Its function is as follows. A murein DD-endopeptidase with specificity for D-Ala-meso-diaminopimelic acid (mDAP) cross-links. Its role is probably to cleave D-Ala-mDAP cross-links to allow insertion of new glycans and thus cell wall expansion. Functionally redundant with MepM and MepH. Partially suppresses an mepS disruption mutant. This is Murein DD-endopeptidase MepH (mepH) from Escherichia coli (strain K12).